The following is a 209-amino-acid chain: Bilin biosynthesis protein RpcF (209 aa).

This sequence belongs to the CpcE/RpcE/PecE family.

Functionally, an enzyme involved in the biosynthesis of bilin. Might be involved in the specific attachment of phycoerythrobilin (PEB) to the R-phycocyanin II alpha chain. In Synechococcus sp. (strain WH8020), this protein is Bilin biosynthesis protein RpcF (rpcF).